Reading from the N-terminus, the 325-residue chain is Serpentine receptor class delta-59 (325 aa).

Helical transmembrane passes span 14–34 (WYWP…LHLI), 45–65 (LKIF…FAFL), 75–95 (ISAA…TCFI), 97–117 (YHVF…TVLF), 132–152 (TYIM…IPFT), 190–210 (FLSA…GCLI), 235–255 (TLIH…IPSF), and 275–295 (ILVS…YFIV).

Belongs to the nematode receptor-like protein srd family.

It localises to the membrane. This chain is Serpentine receptor class delta-59 (srd-59), found in Caenorhabditis elegans.